The sequence spans 155 residues: Large ribosomal subunit protein eL24 (155 aa).

The segment covering 97–129 (KPEIRKAKRDEKAKADKEKKKADKAARKADKAK) has biased composition (basic and acidic residues). Residues 97–155 (KPEIRKAKRDEKAKADKEKKKADKAARKADKAKSAATQASKISKQQAKGAFQKVAATSR) are disordered. The segment covering 133–142 (TQASKISKQQ) has biased composition (polar residues).

It belongs to the eukaryotic ribosomal protein eL24 family.

This Eremothecium gossypii (strain ATCC 10895 / CBS 109.51 / FGSC 9923 / NRRL Y-1056) (Yeast) protein is Large ribosomal subunit protein eL24 (RPL24).